The primary structure comprises 382 residues: Apolipoprotein A-IV (382 aa).

An N-terminal signal peptide occupies residues 1 to 20; the sequence is MFLKAVVLTLSLVAVTGAQA. 13 tandem repeats follow at residues 33 to 54, 60 to 81, 82 to 103, 115 to 136, 137 to 158, 159 to 180, 181 to 202, 203 to 224, 225 to 246, 247 to 268, 269 to 286, 287 to 308, and 309 to 330. The 13 X 22 AA approximate tandem repeats stretch occupies residues 33–330; that stretch reads DYFSQLSNNA…QVEELRQKLG (298 aa).

This sequence belongs to the apolipoprotein A1/A4/E family. Homodimer. Post-translationally, phosphorylation sites are present in the extracellular medium.

The protein localises to the secreted. Functionally, may have a role in chylomicrons and VLDL secretion and catabolism. Required for efficient activation of lipoprotein lipase by ApoC-II; potent activator of LCAT. Apoa-IV is a major component of HDL and chylomicrons. The protein is Apolipoprotein A-IV (APOA4) of Mirounga angustirostris (Northern elephant seal).